Here is a 178-residue protein sequence, read N- to C-terminus: 5,6,7,8-tetrahydromethanopterin hydro-lyase (178 aa).

Histidine 33 serves as the catalytic Proton donor. Residues aspartate 35, leucine 64, lysine 82, threonine 84, and glutamine 99 each contribute to the substrate site.

Belongs to the formaldehyde-activating enzyme family.

The protein resides in the cytoplasm. It carries out the reaction 5,6,7,8-tetrahydromethanopterin + formaldehyde = 5,10-methylenetetrahydromethanopterin + H2O. In terms of biological role, catalyzes the condensation of formaldehyde with tetrahydromethanopterin (H(4)MPT) to 5,10-methylenetetrahydromethanopterin. In Methanosarcina barkeri (strain Fusaro / DSM 804), this protein is 5,6,7,8-tetrahydromethanopterin hydro-lyase (faeA).